We begin with the raw amino-acid sequence, 295 residues long: Phosphoribosylaminoimidazole-succinocarboxamide synthase (295 aa).

The protein belongs to the SAICAR synthetase family.

It carries out the reaction 5-amino-1-(5-phospho-D-ribosyl)imidazole-4-carboxylate + L-aspartate + ATP = (2S)-2-[5-amino-1-(5-phospho-beta-D-ribosyl)imidazole-4-carboxamido]succinate + ADP + phosphate + 2 H(+). It functions in the pathway purine metabolism; IMP biosynthesis via de novo pathway; 5-amino-1-(5-phospho-D-ribosyl)imidazole-4-carboxamide from 5-amino-1-(5-phospho-D-ribosyl)imidazole-4-carboxylate: step 1/2. This Halorhodospira halophila (strain DSM 244 / SL1) (Ectothiorhodospira halophila (strain DSM 244 / SL1)) protein is Phosphoribosylaminoimidazole-succinocarboxamide synthase.